Here is a 313-residue protein sequence, read N- to C-terminus: D-alanine--D-alanine ligase (313 aa).

The ATP-grasp domain maps to 114 to 309 (KWLWKGVGLP…FSKLVLKLIS (196 aa)). An ATP-binding site is contributed by 142-195 (DLTFPVIVKPSHEGSSIGMRKVDTLDALQEAVDFAQQYDSEILIEQWITGREFT). Residues Asp263, Glu276, and Asn278 each coordinate Mg(2+).

It belongs to the D-alanine--D-alanine ligase family. Mg(2+) is required as a cofactor. Mn(2+) serves as cofactor.

The protein localises to the cytoplasm. The enzyme catalyses 2 D-alanine + ATP = D-alanyl-D-alanine + ADP + phosphate + H(+). The protein operates within cell wall biogenesis; peptidoglycan biosynthesis. Its function is as follows. Cell wall formation. In Hydrogenovibrio crunogenus (strain DSM 25203 / XCL-2) (Thiomicrospira crunogena), this protein is D-alanine--D-alanine ligase.